Reading from the N-terminus, the 220-residue chain is Protein myomaker (220 aa).

A topological domain (extracellular) is located at residue Met1. The chain crosses the membrane as a helical span at residues 2–22 (GAFIAKMLLPTISSLVFVPAA). At 23 to 37 (SVAAKRGFHMEAMVY) the chain is on the cytoplasmic side. The helical transmembrane segment at 38 to 58 (FFTMFFTAIYHACDGPGLSIL) threads the bilayer. Topologically, residues 59-64 (CFMKYD) are extracellular. The chain crosses the membrane as a helical span at residues 65–85 (ILEYFSVYGTAISMWVTLLAL). The Cytoplasmic segment spans residues 86–93 (GDFDEPKR). Residues 94-110 (SSLTMFGVLTAAVRIYQ) form a helical membrane-spanning segment. Residues 111 to 112 (DR) are Extracellular-facing. A helical transmembrane segment spans residues 113–133 (LGYGIYSGPIGTAVFMITVKW). Residues 134-153 (LQKMKEKKGLYPDKSVYTQQ) lie on the Cytoplasmic side of the membrane. The chain crosses the membrane as a helical span at residues 154 to 174 (VGPGCCFGALALMLRFYFEEW). Residue Asp175 is a topological domain, extracellular. The helical transmembrane segment at 176 to 196 (YAYVHSFYHVSLAMSFILLLP) threads the bilayer. The Cytoplasmic segment spans residues 197–220 (KKNRYAGTGRNAAKLNCYTLCCCV).

Belongs to the TMEM8 family.

It is found in the cell membrane. In terms of biological role, myoblast-specific protein that mediates myoblast fusion, an essential step for the formation of multi-nucleated muscle fibers. Actively participates in the membrane fusion reaction by mediating the mixing of cell membrane lipids (hemifusion) upstream of mymx. The protein is Protein myomaker of Danio rerio (Zebrafish).